A 443-amino-acid polypeptide reads, in one-letter code: MAKYFGTDGIRGEVANSTITAEFTQKLGNAVGSLINQKNYPKFVIVGQDTRSSGGFLKFALVSGLNAAGIDVLDLGVVPTPVVAFMTVKHRAAAGFVITASHNKFTDNGIKLFSSNGFKLDDALEEEVEDMIDGDFIYQPQFKFGSYKILANAIDEYIESIHSRFAKFVNYKGKVVVDCAHGAASHNFEALLDKFGIDYVSIASNPDGLNINVGCGATCISNIKKAVKEQKADLGISLDGDADRIIIVDENGQEIDGDGILNILAQYSDICGGTNGIVGTQMTNMSYENHYRANKIPFIRSKVGDRYVLEDLVKYGYKIGGESSGHVINLNFGTTGDGLFTAIQLLAIFSQADKPVSEFKLQGELMQQTLINVPLAKKVTREDLQKVASDVNDVEKRLGNRGRVLLRPSGTEPVLRVMVEADDKSLATNEAEYLVEKVKQKLV.

Ser-101 serves as the catalytic Phosphoserine intermediate. Mg(2+) is bound by residues Ser-101, Asp-239, Asp-241, and Asp-243. The residue at position 101 (Ser-101) is a Phosphoserine.

Belongs to the phosphohexose mutase family. Mg(2+) serves as cofactor. Post-translationally, activated by phosphorylation.

The catalysed reaction is alpha-D-glucosamine 1-phosphate = D-glucosamine 6-phosphate. Its function is as follows. Catalyzes the conversion of glucosamine-6-phosphate to glucosamine-1-phosphate. This chain is Phosphoglucosamine mutase, found in Francisella tularensis subsp. novicida (strain U112).